Reading from the N-terminus, the 443-residue chain is ATP-dependent protease ATPase subunit HslU (443 aa).

Residues I18, 60–65 (GVGKTE), D256, E321, and R393 each bind ATP.

It belongs to the ClpX chaperone family. HslU subfamily. A double ring-shaped homohexamer of HslV is capped on each side by a ring-shaped HslU homohexamer. The assembly of the HslU/HslV complex is dependent on binding of ATP.

The protein localises to the cytoplasm. Functionally, ATPase subunit of a proteasome-like degradation complex; this subunit has chaperone activity. The binding of ATP and its subsequent hydrolysis by HslU are essential for unfolding of protein substrates subsequently hydrolyzed by HslV. HslU recognizes the N-terminal part of its protein substrates and unfolds these before they are guided to HslV for hydrolysis. The chain is ATP-dependent protease ATPase subunit HslU from Buchnera aphidicola subsp. Acyrthosiphon pisum (strain 5A).